A 314-amino-acid chain; its full sequence is Putative 4-hydroxy-2-oxoglutarate aldolase, mitochondrial (314 aa).

Residue 50 to 51 (TN) coordinates substrate. Lys-171 serves as the catalytic Schiff-base intermediate with substrate.

Belongs to the DapA family.

The enzyme catalyses (4S)-4-hydroxy-2-oxoglutarate = glyoxylate + pyruvate. The catalysed reaction is (4R)-4-hydroxy-2-oxoglutarate = glyoxylate + pyruvate. Functionally, may catalyze the final step in the metabolic pathway of hydroxyproline. This chain is Putative 4-hydroxy-2-oxoglutarate aldolase, mitochondrial, found in Coccidioides immitis (strain RS) (Valley fever fungus).